The chain runs to 178 residues: Adenine phosphoribosyltransferase (178 aa).

Belongs to the purine/pyrimidine phosphoribosyltransferase family. In terms of assembly, homodimer.

It is found in the cytoplasm. The catalysed reaction is AMP + diphosphate = 5-phospho-alpha-D-ribose 1-diphosphate + adenine. Its pathway is purine metabolism; AMP biosynthesis via salvage pathway; AMP from adenine: step 1/1. Catalyzes a salvage reaction resulting in the formation of AMP, that is energically less costly than de novo synthesis. The chain is Adenine phosphoribosyltransferase from Mycoplasmoides gallisepticum (strain R(low / passage 15 / clone 2)) (Mycoplasma gallisepticum).